We begin with the raw amino-acid sequence, 987 residues long: MASPPPFDICGDLDDDPTPPAPTPLAAPTPNGLNDRLLRLTRTHQRGPSQNPNPNPNPNPKPPPPPPPQEPEPAKVKLAGRRRLCKLSTAGDESAGDDDSIRDILDDLTTRLDSLSVDRPTARPRPHVSPLPCALHADPDPSQSQLNDGTKPSSSFVDCDDDDDDAGGAYGGFGVKEEVTRKVFKASSSFGGRGNDDKMKAKGAYAFDTVSRKTTTESKASKFFGDYDDEDDIDQDAENGKENHADDVGWEKTEDFKMEPTGTGVTRKPYNLPGRIFNMLYPHQREGLRWLWVLHCRGTGGILGDDMGLGKTMQVSAFLAGLFHSRLIKRVLVVAPKTLLTHWTKELSVVSLKDKIRDYSGPNANARNYELKYAFKEGGILLTTYDIVRNNFKMIKGNFTNDFDDEEETLWNYVILDEGHIIKNPKTQRAQSLFEIPCAHRIVISGTPIQNNLKEMWALFYFCCPEVLGDKEQFKARYEHAIIQGNDKNATNRQKHIGSNVAKELRERIKPYFLRRMKNEVFLDSGTGEDKKLAKKNELIIWLKLTSCQRQLYEAFLNSELVHSSMQGSPLAAITILKKICDHPLLLTKKAAEGVLEGMDAMLNNQEMGMVEKMAMNLADMAHDDDDVELQVGQDVSCKLSFMMSLLQNLVSEGHNVLIFSQTRKMLNIIQEAIILEGYKFLRIDGTTKISERERIVKDFQEGPGAPIFLLTTQVGGLGLTLTKAARVIVVDPAWNPSTDNQSVDRAYRIGQMKDVIVYRLMTSGTIEEKIYKLQVFKGALFRTATEHKEQTRYFSKRDIQELFSLPEQGFDVSLTQKQLQEEHGQQLVMDDSLRKHIQFLEQQGIAGVSHHSLLFSKTAILPTLNDNDGLDSRRAMPMAKHYYKGASSDYVANGAAYAMKPKEFIARTYSPNSTSTESPEEIKAKINRLSQTLANTVLVAKLPDRGDKIRRQINELDEKLTVIESSPEPLERKGPTEVICLDDLSV.

2 disordered regions span residues 1-172 (MASP…AYGG) and 224-245 (FGDYDDEDDIDQDAENGKENHA). Composition is skewed to pro residues over residues 18–27 (TPPAPTPLAA) and 51–71 (NPNPNPNPNPKPPPPPPPQEP). Residues 99-110 (DSIRDILDDLTT) show a composition bias toward basic and acidic residues. Residues 141-156 (PSQSQLNDGTKPSSSF) show a composition bias toward polar residues. The span at 226 to 237 (DYDDEDDIDQDA) shows a compositional bias: acidic residues. A Helicase ATP-binding domain is found at 292-466 (WVLHCRGTGG…WALFYFCCPE (175 aa)). 305–312 (DDMGLGKT) serves as a coordination point for ATP. Residues 417 to 420 (DEGH) carry the DEAH box motif. The region spanning 645 to 801 (SLLQNLVSEG…TRYFSKRDIQ (157 aa)) is the Helicase C-terminal domain.

This sequence belongs to the SNF2/RAD54 helicase family. In terms of tissue distribution, expressed in ovaries, roots, shoots and leaves.

The protein localises to the cytoplasm. It is found in the chromosome. Functionally, DNA helicase that acts as an essential component of the spindle assembly checkpoint. Plays an indispensable role in the development of seed endosperm. Is required to secure sister chromosome separation during endosperm syncytial mitosis, which involves extremely rapid free nuclear cycles. The protein is SNF2 domain-containing protein ENL1 of Oryza sativa subsp. japonica (Rice).